The chain runs to 244 residues: Prolactin-7D1 (244 aa).

A signal peptide spans 1-30 (MLPSLIQPCSSGTLLMLLMSNLFLWEKVSS). Disulfide bonds link cysteine 99-cysteine 215 and cysteine 232-cysteine 240.

This sequence belongs to the somatotropin/prolactin family.

The protein resides in the secreted. This chain is Prolactin-7D1 (Prl7d1), found in Mus musculus (Mouse).